The chain runs to 213 residues: Kynurenine formamidase (213 aa).

Residue W18 participates in substrate binding. Zn(2+) contacts are provided by H48, H52, and D54. H58 functions as the Proton donor/acceptor in the catalytic mechanism. Positions 160 and 172 each coordinate Zn(2+).

It belongs to the Cyclase 1 superfamily. KynB family. Homodimer. Zn(2+) is required as a cofactor.

The catalysed reaction is N-formyl-L-kynurenine + H2O = L-kynurenine + formate + H(+). It participates in amino-acid degradation; L-tryptophan degradation via kynurenine pathway; L-kynurenine from L-tryptophan: step 2/2. Catalyzes the hydrolysis of N-formyl-L-kynurenine to L-kynurenine, the second step in the kynurenine pathway of tryptophan degradation. In Burkholderia lata (strain ATCC 17760 / DSM 23089 / LMG 22485 / NCIMB 9086 / R18194 / 383), this protein is Kynurenine formamidase.